The chain runs to 407 residues: Peptidase T (407 aa).

A Zn(2+)-binding site is contributed by His78. The active site involves Asp80. Residue Asp139 coordinates Zn(2+). The Proton acceptor role is filled by Glu173. Residues Glu174, Asp196, and His378 each contribute to the Zn(2+) site.

Belongs to the peptidase M20B family. Requires Zn(2+) as cofactor.

It is found in the cytoplasm. It carries out the reaction Release of the N-terminal residue from a tripeptide.. Cleaves the N-terminal amino acid of tripeptides. This chain is Peptidase T, found in Shewanella pealeana (strain ATCC 700345 / ANG-SQ1).